The chain runs to 303 residues: Bifunctional protein FolD (303 aa).

Residues 165 to 167 (GRS), serine 190, and isoleucine 231 contribute to the NADP(+) site.

It belongs to the tetrahydrofolate dehydrogenase/cyclohydrolase family. In terms of assembly, homodimer.

The enzyme catalyses (6R)-5,10-methylene-5,6,7,8-tetrahydrofolate + NADP(+) = (6R)-5,10-methenyltetrahydrofolate + NADPH. The catalysed reaction is (6R)-5,10-methenyltetrahydrofolate + H2O = (6R)-10-formyltetrahydrofolate + H(+). The protein operates within one-carbon metabolism; tetrahydrofolate interconversion. In terms of biological role, catalyzes the oxidation of 5,10-methylenetetrahydrofolate to 5,10-methenyltetrahydrofolate and then the hydrolysis of 5,10-methenyltetrahydrofolate to 10-formyltetrahydrofolate. The sequence is that of Bifunctional protein FolD from Prochlorococcus marinus (strain NATL1A).